The following is a 415-amino-acid chain: All trans-polyprenyl-diphosphate synthase PDSS1 (415 aa).

Residues 16–35 are disordered; that stretch reads PAARSPGPGSPGRAGPLGPS. Residues K134, R137, and H173 each coordinate isopentenyl diphosphate. The Mg(2+) site is built by D180 and D184. R190 provides a ligand contact to isopentenyl diphosphate.

The protein belongs to the FPP/GGPP synthase family. Heterotetramer composed of 2 PDSS1/DPS1 and 2 PDSS2/DLP1 subunits. The cofactor is Mg(2+).

Its subcellular location is the mitochondrion. The enzyme catalyses 7 isopentenyl diphosphate + (2E,6E)-farnesyl diphosphate = all-trans-decaprenyl diphosphate + 7 diphosphate. It catalyses the reaction 6 isopentenyl diphosphate + (2E,6E)-farnesyl diphosphate = all-trans-nonaprenyl diphosphate + 6 diphosphate. It functions in the pathway cofactor biosynthesis; ubiquinone biosynthesis. Its function is as follows. Heterotetrameric enzyme that catalyzes the condensation of farnesyl diphosphate (FPP), which acts as a primer, and isopentenyl diphosphate (IPP) to produce prenyl diphosphates of varying chain lengths and participates in the determination of the side chain of ubiquinone. Supplies nona and decaprenyl diphosphate, the precursors for the side chain of the isoprenoid quinones ubiquinone-9 (Q9)and ubiquinone-10 (Q10) respectively. The enzyme adds isopentenyl diphosphate molecules sequentially to farnesyl diphosphate with trans stereochemistry. This is All trans-polyprenyl-diphosphate synthase PDSS1 from Homo sapiens (Human).